The following is a 686-amino-acid chain: Tripartite terminase subunit 3 (686 aa).

Positions 219-226 (IPRRHGKT) match the Walker A motif motif. A Walker B motif motif is present at residues 314–319 (LLYVDE). Glu-319 functions as the For ATPase activity in the catalytic mechanism. Residues Asp-475, Glu-548, and Asp-660 each act as for nuclease activity in the active site.

The protein belongs to the herpesviridae TRM3 protein family. Interacts with the terminase subunits TRM1 and TRM2. Interacts with portal protein.

The protein localises to the host nucleus. Its function is as follows. Component of the molecular motor that translocates viral genomic DNA in empty capsid during DNA packaging. Forms a tripartite terminase complex together with TRM1 and TRM2 in the host cytoplasm. Once the complex reaches the host nucleus, it interacts with the capsid portal vertex. This portal forms a ring in which genomic DNA is translocated into the capsid. TRM3 carries an RNase H-like nuclease activity that plays an important role for the cleavage of concatemeric viral DNA into unit length genomes. In Equine herpesvirus 2 (strain 86/87) (EHV-2), this protein is Tripartite terminase subunit 3.